Reading from the N-terminus, the 372-residue chain is Phospho-N-acetylmuramoyl-pentapeptide-transferase (372 aa).

The next 10 membrane-spanning stretches (helical) occupy residues 21–41 (SLTLRALLAVITALAFSMIFG), 71–91 (TPTMGGVLILSAIGVSTLLWA), 98–118 (VWILLIVMIIFGAVGWADDWL), 134–154 (YFWLSMGALFVGISLYYIATL), 176–196 (MIPFSAVPFGIGFIIFTYFVI), 211–231 (GLAILPVVLVAAGLGAMAYVS), 251–271 (VIIVCGAMIGAGLGFLWFNAH), 275–295 (VFMGDVGALSLGAMLGTIAVM), 300–320 (IAFAIMGGLFVAEALSVMLQV), and 349–369 (QVVARFWIIAIILVILGLMTL).

The protein belongs to the glycosyltransferase 4 family. MraY subfamily. The cofactor is Mg(2+).

Its subcellular location is the cell inner membrane. It catalyses the reaction UDP-N-acetyl-alpha-D-muramoyl-L-alanyl-gamma-D-glutamyl-meso-2,6-diaminopimeloyl-D-alanyl-D-alanine + di-trans,octa-cis-undecaprenyl phosphate = di-trans,octa-cis-undecaprenyl diphospho-N-acetyl-alpha-D-muramoyl-L-alanyl-D-glutamyl-meso-2,6-diaminopimeloyl-D-alanyl-D-alanine + UMP. Its pathway is cell wall biogenesis; peptidoglycan biosynthesis. Its function is as follows. Catalyzes the initial step of the lipid cycle reactions in the biosynthesis of the cell wall peptidoglycan: transfers peptidoglycan precursor phospho-MurNAc-pentapeptide from UDP-MurNAc-pentapeptide onto the lipid carrier undecaprenyl phosphate, yielding undecaprenyl-pyrophosphoryl-MurNAc-pentapeptide, known as lipid I. This chain is Phospho-N-acetylmuramoyl-pentapeptide-transferase, found in Psychrobacter arcticus (strain DSM 17307 / VKM B-2377 / 273-4).